The chain runs to 369 residues: Uroporphyrinogen decarboxylase (369 aa).

Residues 36-40 (RQAGR), aspartate 86, tyrosine 162, serine 217, and histidine 342 each bind substrate.

The protein belongs to the uroporphyrinogen decarboxylase family. In terms of assembly, homodimer.

The protein localises to the cytoplasm. It catalyses the reaction uroporphyrinogen III + 4 H(+) = coproporphyrinogen III + 4 CO2. The protein operates within porphyrin-containing compound metabolism; protoporphyrin-IX biosynthesis; coproporphyrinogen-III from 5-aminolevulinate: step 4/4. Its function is as follows. Catalyzes the decarboxylation of four acetate groups of uroporphyrinogen-III to yield coproporphyrinogen-III. The chain is Uroporphyrinogen decarboxylase from Albidiferax ferrireducens (strain ATCC BAA-621 / DSM 15236 / T118) (Rhodoferax ferrireducens).